A 516-amino-acid chain; its full sequence is Extracellular endo-inulinase inu2 (516 aa).

An N-terminal signal peptide occupies residues 1–23 (MLNPKVAYMVWMTCLGLTLPSQA). Substrate contacts are provided by residues 41–43 (MNE) and N61. The active site involves E43. N108 and N109 each carry an N-linked (GlcNAc...) asparagine glycan. Residue D176 coordinates substrate. N210 is a glycosylation site (N-linked (GlcNAc...) asparagine). N320 provides a ligand contact to substrate. N372 carries N-linked (GlcNAc...) asparagine glycosylation.

The protein belongs to the glycosyl hydrolase 32 family.

It is found in the secreted. The enzyme catalyses Endohydrolysis of (2-&gt;1)-beta-D-fructosidic linkages in inulin.. Endo-inulinase involved in utilization of the plant storage polymer inulin, consisting of fructooligosaccharides with a degree of polymerization (DP) value from 2 to 60. In Aspergillus ficuum, this protein is Extracellular endo-inulinase inu2 (inu2).